Consider the following 173-residue polypeptide: Crossover junction endodeoxyribonuclease RuvC (173 aa).

Catalysis depends on residues aspartate 8, glutamate 67, and aspartate 139. 3 residues coordinate Mg(2+): aspartate 8, glutamate 67, and aspartate 139.

This sequence belongs to the RuvC family. Homodimer which binds Holliday junction (HJ) DNA. The HJ becomes 2-fold symmetrical on binding to RuvC with unstacked arms; it has a different conformation from HJ DNA in complex with RuvA. In the full resolvosome a probable DNA-RuvA(4)-RuvB(12)-RuvC(2) complex forms which resolves the HJ. Mg(2+) serves as cofactor.

The protein resides in the cytoplasm. The catalysed reaction is Endonucleolytic cleavage at a junction such as a reciprocal single-stranded crossover between two homologous DNA duplexes (Holliday junction).. Its function is as follows. The RuvA-RuvB-RuvC complex processes Holliday junction (HJ) DNA during genetic recombination and DNA repair. Endonuclease that resolves HJ intermediates. Cleaves cruciform DNA by making single-stranded nicks across the HJ at symmetrical positions within the homologous arms, yielding a 5'-phosphate and a 3'-hydroxyl group; requires a central core of homology in the junction. The consensus cleavage sequence is 5'-(A/T)TT(C/G)-3'. Cleavage occurs on the 3'-side of the TT dinucleotide at the point of strand exchange. HJ branch migration catalyzed by RuvA-RuvB allows RuvC to scan DNA until it finds its consensus sequence, where it cleaves and resolves the cruciform DNA. This chain is Crossover junction endodeoxyribonuclease RuvC, found in Salmonella arizonae (strain ATCC BAA-731 / CDC346-86 / RSK2980).